A 146-amino-acid chain; its full sequence is Small ribosomal subunit protein uS5 (146 aa).

Positions 8–71 (FQEAIVKIGR…DDAFKSLVTV (64 aa)) constitute an S5 DRBM domain.

The protein belongs to the universal ribosomal protein uS5 family. Part of the 30S ribosomal subunit. Contacts proteins S4 and S8.

Functionally, with S4 and S12 plays an important role in translational accuracy. Its function is as follows. Located at the back of the 30S subunit body where it stabilizes the conformation of the head with respect to the body. The protein is Small ribosomal subunit protein uS5 of Aliarcobacter butzleri (strain RM4018) (Arcobacter butzleri).